Consider the following 318-residue polypeptide: Zinc chaperone YjiA (318 aa).

11 to 19 (GFLGAGKTT) lines the GTP pocket. The Zn(2+) site is built by glutamate 37, glutamate 42, cysteine 66, glutamate 74, and histidine 114. Residues 64-67 (CICC) carry the CXCC motif motif. Residue aspartate 161 participates in GTP binding. Positions 167, 170, and 187 each coordinate Zn(2+). One can recognise a CobW C-terminal domain in the interval 224 to 315 (ISSIVVELDY…EEEIRAAFAG (92 aa)).

This sequence belongs to the SIMIBI class G3E GTPase family. ZNG1 subfamily. In terms of assembly, monomer in the apo form. Metal binding induces oligomerization. Forms homodimers and higher oligomers.

It catalyses the reaction GTP + H2O = GDP + phosphate + H(+). With respect to regulation, GTPase activity is inhibited by metal binding. Activity is decreased in the presence of Co(II) or Ni(II), and is completely inhibited in the presence of Zn(II). Its function is as follows. Zinc chaperone that directly transfers zinc cofactor to target proteins, thereby activating them. Zinc is transferred from the CXCC motif in the GTPase domain to the zinc binding site in target proteins in a process requiring GTP hydrolysis. The polypeptide is Zinc chaperone YjiA (yjiA) (Escherichia coli (strain K12)).